A 219-amino-acid chain; its full sequence is tRNA (guanine-N(7)-)-methyltransferase (219 aa).

Residues glutamate 46, glutamate 71, aspartate 100, and aspartate 122 each contribute to the S-adenosyl-L-methionine site. The active site involves aspartate 122. Lysine 126 contacts substrate. Positions 128 to 133 (KHEKRR) are interaction with RNA. Substrate contacts are provided by residues aspartate 158 and 199–202 (TEYE).

Belongs to the class I-like SAM-binding methyltransferase superfamily. TrmB family.

It carries out the reaction guanosine(46) in tRNA + S-adenosyl-L-methionine = N(7)-methylguanosine(46) in tRNA + S-adenosyl-L-homocysteine. The protein operates within tRNA modification; N(7)-methylguanine-tRNA biosynthesis. Its function is as follows. Catalyzes the formation of N(7)-methylguanine at position 46 (m7G46) in tRNA. This chain is tRNA (guanine-N(7)-)-methyltransferase, found in Oenococcus oeni (strain ATCC BAA-331 / PSU-1).